A 1051-amino-acid polypeptide reads, in one-letter code: Eukaryotic translation initiation factor 3 subunit A (1051 aa).

Positions 92–121 form a coiled coil; it reads LKKFIELAEKKVTEAQAKADEIQSSLESAA. Positions 339–523 constitute a PCI domain; that stretch reads MTKAASFVLL…GVLTFDTDIF (185 aa). Positions 608-905 form a coiled coil; that stretch reads RVLIEKKKEA…EAEARRAARK (298 aa). 4 stretches are compositionally biased toward basic and acidic residues: residues 617 to 632, 642 to 664, 794 to 901, and 916 to 926; these read AATD…EETR, EAEK…RDEQ, KEVS…EARR, and AELERPVERTA. Disordered stretches follow at residues 617–664 and 794–1051; these read AATD…RDEQ and KEVS…QQQQ. 2 stretches are compositionally biased toward low complexity: residues 948–961 and 1010–1039; these read KEAA…AAAE and SSSS…SPAP.

The protein belongs to the eIF-3 subunit A family. Component of the eukaryotic translation initiation factor 3 (eIF-3) complex.

Its subcellular location is the cytoplasm. RNA-binding component of the eukaryotic translation initiation factor 3 (eIF-3) complex, which is involved in protein synthesis of a specialized repertoire of mRNAs and, together with other initiation factors, stimulates binding of mRNA and methionyl-tRNAi to the 40S ribosome. The eIF-3 complex specifically targets and initiates translation of a subset of mRNAs involved in cell proliferation. This is Eukaryotic translation initiation factor 3 subunit A (tif32) from Aspergillus fumigatus (strain CBS 144.89 / FGSC A1163 / CEA10) (Neosartorya fumigata).